The following is a 405-amino-acid chain: Tryptophan synthase beta chain (405 aa).

K98 carries the N6-(pyridoxal phosphate)lysine modification.

It belongs to the TrpB family. In terms of assembly, tetramer of two alpha and two beta chains. Pyridoxal 5'-phosphate is required as a cofactor.

It catalyses the reaction (1S,2R)-1-C-(indol-3-yl)glycerol 3-phosphate + L-serine = D-glyceraldehyde 3-phosphate + L-tryptophan + H2O. Its pathway is amino-acid biosynthesis; L-tryptophan biosynthesis; L-tryptophan from chorismate: step 5/5. Its function is as follows. The beta subunit is responsible for the synthesis of L-tryptophan from indole and L-serine. This is Tryptophan synthase beta chain from Stenotrophomonas maltophilia (strain K279a).